The sequence spans 163 residues: Sorting nexin-3 (163 aa).

A PX domain is found at 39 to 162; sequence VEVRDPRTHF…VRFLQDEVFN (124 aa). A 1,2-diacyl-sn-glycero-3-phospho-(1D-myo-inositol-3-phosphate)-binding residues include arginine 82, serine 84, lysine 113, arginine 119, and arginine 128.

Belongs to the sorting nexin family.

It is found in the cytoplasm. It localises to the golgi apparatus membrane. The protein resides in the prevacuolar compartment membrane. In terms of biological role, required for retention of late Golgi membrane proteins. Component of the retrieval machinery that functions by direct interaction with the cytosolic tails of certain TGN membrane proteins during the sorting/budding process at the prevacuolar compartment. Binds phosphatidylinositol 3-phosphate (PtdIns(P3)). The sequence is that of Sorting nexin-3 (SNX3) from Eremothecium gossypii (strain ATCC 10895 / CBS 109.51 / FGSC 9923 / NRRL Y-1056) (Yeast).